We begin with the raw amino-acid sequence, 292 residues long: N-acetylneuraminate lyase (292 aa).

The aceneuramate site is built by Ser47 and Thr48. Catalysis depends on Tyr136, which acts as the Proton donor. Lys164 functions as the Schiff-base intermediate with substrate in the catalytic mechanism. Aceneuramate-binding residues include Thr166, Gly188, Asp190, Glu191, and Ser207.

Belongs to the DapA family. NanA subfamily. As to quaternary structure, homotetramer.

Its subcellular location is the cytoplasm. It carries out the reaction aceneuramate = aldehydo-N-acetyl-D-mannosamine + pyruvate. The protein operates within amino-sugar metabolism; N-acetylneuraminate degradation; D-fructose 6-phosphate from N-acetylneuraminate: step 1/5. Its function is as follows. Catalyzes the reversible aldol cleavage of N-acetylneuraminic acid (sialic acid; Neu5Ac) to form pyruvate and N-acetylmannosamine (ManNAc) via a Schiff base intermediate. This chain is N-acetylneuraminate lyase, found in Actinobacillus pleuropneumoniae serotype 5b (strain L20).